The following is a 229-amino-acid chain: Ferric nitrobindin-like protein (229 aa).

Positions 1–54 are disordered; the sequence is MSENSTPNNPVVPGAGADGPSLSDSASISGSDAVNLAAEQSKSTAHRNIPGLGD. A compositionally biased stretch (low complexity) spans 18–33; that stretch reads DGPSLSDSASISGSDA. The GXWXGXG motif lies at 82 to 88; it reads GVWRGEG.

The protein belongs to the nitrobindin family.

This chain is Ferric nitrobindin-like protein, found in Corynebacterium glutamicum (strain R).